The chain runs to 149 residues: uncharacterized protein (149 aa).

Disordered regions lie at residues 24-74 (TSQG…NDLE) and 129-149 (AIQDDAGIPNPEMPKSAPRAP). The segment covering 28-42 (EDVKPEPKPEVDEKV) has biased composition (basic and acidic residues). Residues 102–131 (SELESLKEKVSSATSMEELREIMEEFRAIQ) are a coiled coil.

This is an uncharacterized protein from Archaeoglobus fulgidus (strain ATCC 49558 / DSM 4304 / JCM 9628 / NBRC 100126 / VC-16).